The following is a 357-amino-acid chain: DNA replication and repair protein RecF (357 aa).

30-37 (GANGSGKT) is an ATP binding site.

The protein belongs to the RecF family.

It localises to the cytoplasm. Functionally, the RecF protein is involved in DNA metabolism; it is required for DNA replication and normal SOS inducibility. RecF binds preferentially to single-stranded, linear DNA. It also seems to bind ATP. The protein is DNA replication and repair protein RecF of Salmonella arizonae (strain ATCC BAA-731 / CDC346-86 / RSK2980).